The primary structure comprises 115 residues: Nucleoid-associated protein tlr0723 (115 aa).

It belongs to the YbaB/EbfC family. In terms of assembly, homodimer.

The protein localises to the cytoplasm. It is found in the nucleoid. Functionally, binds to DNA and alters its conformation. May be involved in regulation of gene expression, nucleoid organization and DNA protection. In Thermosynechococcus vestitus (strain NIES-2133 / IAM M-273 / BP-1), this protein is Nucleoid-associated protein tlr0723.